The primary structure comprises 1070 residues: DNA-directed RNA polymerase subunit beta (1070 aa).

Belongs to the RNA polymerase beta chain family. As to quaternary structure, in plastids the minimal PEP RNA polymerase catalytic core is composed of four subunits: alpha, beta, beta', and beta''. When a (nuclear-encoded) sigma factor is associated with the core the holoenzyme is formed, which can initiate transcription.

Its subcellular location is the plastid. It localises to the chloroplast. The catalysed reaction is RNA(n) + a ribonucleoside 5'-triphosphate = RNA(n+1) + diphosphate. In terms of biological role, DNA-dependent RNA polymerase catalyzes the transcription of DNA into RNA using the four ribonucleoside triphosphates as substrates. This chain is DNA-directed RNA polymerase subunit beta, found in Chloranthus spicatus (Chulantree).